The primary structure comprises 195 residues: NADH-quinone oxidoreductase subunit B (195 aa).

The [4Fe-4S] cluster site is built by cysteine 74, cysteine 75, cysteine 139, and cysteine 169.

This sequence belongs to the complex I 20 kDa subunit family. In terms of assembly, NDH-1 is composed of 14 different subunits. Subunits NuoB, C, D, E, F, and G constitute the peripheral sector of the complex. The cofactor is [4Fe-4S] cluster.

It is found in the cell inner membrane. The enzyme catalyses a quinone + NADH + 5 H(+)(in) = a quinol + NAD(+) + 4 H(+)(out). Functionally, NDH-1 shuttles electrons from NADH, via FMN and iron-sulfur (Fe-S) centers, to quinones in the respiratory chain. The immediate electron acceptor for the enzyme in this species is believed to be ubiquinone. Couples the redox reaction to proton translocation (for every two electrons transferred, four hydrogen ions are translocated across the cytoplasmic membrane), and thus conserves the redox energy in a proton gradient. The polypeptide is NADH-quinone oxidoreductase subunit B (Methylobacterium radiotolerans (strain ATCC 27329 / DSM 1819 / JCM 2831 / NBRC 15690 / NCIMB 10815 / 0-1)).